The primary structure comprises 367 residues: Homoserine O-acetyltransferase (367 aa).

The 307-residue stretch at 44–350 (NAILVTHAWT…AYGHDAFLLE (307 aa)) folds into the AB hydrolase-1 domain. The Nucleophile role is filled by Ser-150. Substrate is bound at residue Arg-217. Active-site residues include Asp-311 and His-344. Asp-345 contributes to the substrate binding site.

Belongs to the AB hydrolase superfamily. MetX family. Homodimer.

It localises to the cytoplasm. It catalyses the reaction L-homoserine + acetyl-CoA = O-acetyl-L-homoserine + CoA. Its pathway is amino-acid biosynthesis; L-methionine biosynthesis via de novo pathway; O-acetyl-L-homoserine from L-homoserine: step 1/1. Its function is as follows. Transfers an acetyl group from acetyl-CoA to L-homoserine, forming acetyl-L-homoserine. In Citrifermentans bemidjiense (strain ATCC BAA-1014 / DSM 16622 / JCM 12645 / Bem) (Geobacter bemidjiensis), this protein is Homoserine O-acetyltransferase.